Here is a 95-residue protein sequence, read N- to C-terminus: Feather keratin B-4 (95 aa).

An N-acetylserine modification is found at Ser-1.

This sequence belongs to the avian keratin family. As to quaternary structure, the avian keratins (F-ker, S-ker, C-ker and B-ker) are a complex mixture of very similar polypeptides.

This Anas platyrhynchos (Mallard) protein is Feather keratin B-4.